Consider the following 151-residue polypeptide: uncharacterized protein (151 aa).

3 helical membrane passes run Leu12–Ile32, Leu59–Leu79, and Tyr114–Gly134.

The protein resides in the cell membrane. This is an uncharacterized protein from Bacillus subtilis (strain 168).